Consider the following 1331-residue polypeptide: MTDTATGVHSNANGVEKVPTPVFSIEGEPTQETAPTRMDPFDRPKNDNDPFEDALKRCHKILEKLDCPFVTGKEKDLDESDDMTENEDHDEMANEDDGIPSNEKKVETRKMDCTSGQLLAPKLPEKAESISSASESSEDSESVAILKYTVRTCYAIWKKRQKNSEIALKGLMIVLELCLSQPSARDDAFSALLETLGYNTVTFWKAVVPQIYNSDLSYATQYREALLFSLVLYDVNHSKNRLRELYAAVPGVRQSMLGIRAKQFGERYRHLQMKIARSRASSRMSSKMGSEENLPAMASMMNDVVFDEEPHTQSPLVDMSHDKQRVINVSNAPPVSISRKTSGSWEIKQGSGGLVACVDPVMSADKKNIWLSNLGVNMQEELKEHSTSTNSLGLPLIKQACAGEVFCVLERNEKKEELTPKQQAVESDMSLLSVLNTYNKHSYQLNPVVVNQDDYNTYYGGISNGLLWPALHNLPQYISPCFDDPELLREQWCAYVRVNYLFAINAARNSRAQDFIWIHDYHLMLCGQIMRSLESSLDIGFFIHIPFQPPANFMTKYKTVADPIMRALLRFTKVGFQTSRDRDTFVKLVAKHIKRTKIEYDSRLDRYTIEHDGWTCSLGVFPVSIKIADFVNIAKNPQTIIEAEEIKKQIMGRSADGGQLFFSVERFDYTKGISEKLRAWQRYFEKYPDRIGKDVLFQVAVTNRRSVDSYRQYQDDVLAVADLINQKFKSEDYPEWKPVIFETDGLPRTRLIAHYLAMDIGVVTPSKDGMNLVAKEMLVCNPTASLVLSTGAGTEVQLSNAQFYSEQEGKCYHRVEEISNTEAFADNFFAAATESKETRTKHGEKINQFLCVHDIDEWSDQFLDPKWTHEVISQCEVKQLGQFYGLMSRTAQVRRQIVECVLKGLPIRPHFRYSLENAKNSLESSCKSGTKLSLEADEESGEEKGFEITYDIHDELSEMEKDLAFLAFIQSDEYENAEEFIKTLGSFYEGGPVLFKNEVKQAAEMLQQGIHYNTFFTDRDGTLKSYACSYPTSVQPAYSAVIQAQFARRCATFCAIVTTAPLLHTGILEVATIPEGYYAYGASAGREWYLNPAQQFKDRSFSAIDLNLMNKVFDIIEELLERPEFRIFKWIGSGIQKHCGHITIAKQDVNGTIPSRKVIRLYEQLVKIVNDFDPNGTTLTMRESDLDFKIYVKAKLKGRIFNKGHGIRLVRERLKPNMSKGNCLVCGDNESDIPMLEECLKLAGSKVYTIWVTADTNLQEKVTQLCDRFSCSNIHFVSCPQVLLGAMAYATAHTLVDERNRKLDYYYDSDTPMDQEESSTLGASLGTSFGN.

Residues methionine 1–asparagine 13 are compositionally biased toward polar residues. Disordered stretches follow at residues methionine 1 to proline 50, threonine 71 to leucine 118, and proline 1312 to asparagine 1331. The span at aspartate 39–proline 50 shows a compositional bias: basic and acidic residues. The segment covering leucine 77–glycine 98 has biased composition (acidic residues). Basic and acidic residues predominate over residues asparagine 102 to aspartate 112. Residues serine 1318–asparagine 1331 are compositionally biased toward polar residues.

This sequence in the N-terminal section; belongs to the glycosyltransferase 20 family. The protein in the C-terminal section; belongs to the gob-1 trehalose phosphatase family.

It catalyses the reaction D-glucose 6-phosphate + UDP-alpha-D-glucose = alpha,alpha-trehalose 6-phosphate + UDP + H(+). Functionally, catalyzes the production of trehalose from glucose-6-phosphate and UDP-alpha-D-glucose in a 2 step process. The chain is Alpha,alpha-trehalose-phosphate synthase [UDP-forming] 1 (tps-1) from Caenorhabditis elegans.